The sequence spans 417 residues: Serine hydroxymethyltransferase (417 aa).

Residues leucine 121 and 125–127 (GHL) contribute to the (6S)-5,6,7,8-tetrahydrofolate site. Position 229 is an N6-(pyridoxal phosphate)lysine (lysine 229). Position 355-357 (355-357 (SPF)) interacts with (6S)-5,6,7,8-tetrahydrofolate.

The protein belongs to the SHMT family. As to quaternary structure, homodimer. The cofactor is pyridoxal 5'-phosphate.

It localises to the cytoplasm. The catalysed reaction is (6R)-5,10-methylene-5,6,7,8-tetrahydrofolate + glycine + H2O = (6S)-5,6,7,8-tetrahydrofolate + L-serine. It functions in the pathway one-carbon metabolism; tetrahydrofolate interconversion. The protein operates within amino-acid biosynthesis; glycine biosynthesis; glycine from L-serine: step 1/1. In terms of biological role, catalyzes the reversible interconversion of serine and glycine with tetrahydrofolate (THF) serving as the one-carbon carrier. This reaction serves as the major source of one-carbon groups required for the biosynthesis of purines, thymidylate, methionine, and other important biomolecules. Also exhibits THF-independent aldolase activity toward beta-hydroxyamino acids, producing glycine and aldehydes, via a retro-aldol mechanism. This Shewanella putrefaciens (strain CN-32 / ATCC BAA-453) protein is Serine hydroxymethyltransferase.